A 344-amino-acid chain; its full sequence is F-box protein HRT3 (344 aa).

One copy of the TPR repeat lies at 14–47 (AIAIWEKGVLKEKDGSMSDAINFYRSALKIHDNV). Residues 98 to 148 (WILEILPDDILLRIIKKVILMSGESWVNLSMTCSTFSKLCFHDSVPFKTFA) form the F-box domain.

In terms of assembly, interacts with SKP1. Component of the probable SCF(HRT3) complex containing CDC53, SKP1, RBX1 and HRT3.

Its pathway is protein modification; protein ubiquitination. In terms of biological role, substrate recognition component of a SCF (SKP1-CUL1-F-box protein) E3 ubiquitin-protein ligase complex which mediates the ubiquitination and subsequent proteasomal degradation of target proteins. Probably recognizes and binds to phosphorylated target proteins. In Saccharomyces cerevisiae (strain ATCC 204508 / S288c) (Baker's yeast), this protein is F-box protein HRT3 (HRT3).